An 87-amino-acid chain; its full sequence is Anaphase-promoting complex subunit 11 (87 aa).

An RING-type; atypical zinc finger spans residues 35 to 77 (CVDCKIPGDDCPPVWGVCNHAFHMHCILKWLNANELQQCPMCR).

It belongs to the RING-box family. As to quaternary structure, the APC/C is composed of at least 13 subunits that stay tightly associated throughout the cell cycle: anapc1, anapc2, anapc3, anapc4, anapc5, anapc6, anapc7, anapc8, anapc10, anapc11, cdc20, cdc26 and cdh1.

Its subcellular location is the nucleus. It functions in the pathway protein modification; protein ubiquitination. Its function is as follows. Component of the anaphase promoting complex/cyclosome (APC/C), a cell cycle-regulated E3 ubiquitin-protein ligase complex that controls progression through mitosis and the G1 phase of the cell cycle. In Dictyostelium discoideum (Social amoeba), this protein is Anaphase-promoting complex subunit 11 (anapc11).